The sequence spans 462 residues: Putative zinc metalloprotease RSc1411 (462 aa).

The chain crosses the membrane as a helical span at residues 1-21 (MLTVLAFVFAIAVLIVVHELG). Zn(2+) is bound at residue H18. E19 is an active-site residue. H22 serves as a coordination point for Zn(2+). The chain crosses the membrane as a helical span at residues 102–124 (FAIVAAGPVFNFLLAIALYALLA). A PDZ domain is found at 201–283 (TVRLRELPSA…MPEQNASIDI (83 aa)). The next 2 membrane-spanning stretches (helical) occupy residues 386-406 (FVAF…LPVP) and 430-450 (WQAV…SLAL).

The protein belongs to the peptidase M50B family. It depends on Zn(2+) as a cofactor.

It is found in the cell inner membrane. The polypeptide is Putative zinc metalloprotease RSc1411 (Ralstonia nicotianae (strain ATCC BAA-1114 / GMI1000) (Ralstonia solanacearum)).